A 235-amino-acid polypeptide reads, in one-letter code: Uridylate kinase (235 aa).

ATP is bound at residue 9–12 (KISG). Glycine 50 serves as a coordination point for UMP. Residues glycine 51 and arginine 55 each contribute to the ATP site. Residues aspartate 70 and 131 to 138 (TGFPYFTT) contribute to the UMP site. Residues asparagine 159, tyrosine 165, and aspartate 168 each contribute to the ATP site.

It belongs to the UMP kinase family. As to quaternary structure, homohexamer; trimer of dimers.

The protein localises to the cytoplasm. It catalyses the reaction UMP + ATP = UDP + ADP. Its pathway is pyrimidine metabolism; CTP biosynthesis via de novo pathway; UDP from UMP (UMPK route): step 1/1. With respect to regulation, unlike other bacteria, is not activated by GTP. UTP is a competitive inhibitor against UMP and a non-competitive inhibitor toward ATP. In terms of biological role, catalyzes the reversible phosphorylation of UMP to UDP, with ATP as the most efficient phosphate donor. Is also able to phosphorylate dUMP. This chain is Uridylate kinase (pyrH), found in Ureaplasma parvum serovar 3 (strain ATCC 700970).